Here is a 204-residue protein sequence, read N- to C-terminus: Thymidine kinase (204 aa).

ATP contacts are provided by residues 15–22 and 88–91; these read GSMFSGKS and DEVQ. E89 serves as the catalytic Proton acceptor. Positions 145, 148, 183, and 186 each coordinate Zn(2+).

It belongs to the thymidine kinase family. As to quaternary structure, homotetramer.

It is found in the cytoplasm. The catalysed reaction is thymidine + ATP = dTMP + ADP + H(+). The protein is Thymidine kinase of Halalkalibacterium halodurans (strain ATCC BAA-125 / DSM 18197 / FERM 7344 / JCM 9153 / C-125) (Bacillus halodurans).